A 517-amino-acid chain; its full sequence is Glutamate--tRNA ligase (517 aa).

A 'HIGH' region motif is present at residues 10-20 (PSPSGFLHVGG). Positions 107, 109, 134, and 136 each coordinate Zn(2+). Positions 250 to 254 (KLSKR) match the 'KMSKS' region motif. Lys253 provides a ligand contact to ATP.

This sequence belongs to the class-I aminoacyl-tRNA synthetase family. Glutamate--tRNA ligase type 1 subfamily. As to quaternary structure, monomer. The cofactor is Zn(2+).

It is found in the cytoplasm. The enzyme catalyses tRNA(Glu) + L-glutamate + ATP = L-glutamyl-tRNA(Glu) + AMP + diphosphate. Catalyzes the attachment of glutamate to tRNA(Glu) in a two-step reaction: glutamate is first activated by ATP to form Glu-AMP and then transferred to the acceptor end of tRNA(Glu). The chain is Glutamate--tRNA ligase from Leptospira biflexa serovar Patoc (strain Patoc 1 / ATCC 23582 / Paris).